The sequence spans 32 residues: Cytochrome b6-f complex subunit 8 (32 aa).

The helical transmembrane segment at 6 to 26 (IVSLAWAALMVVFTFSLSLVV) threads the bilayer.

It belongs to the PetN family. In terms of assembly, the 4 large subunits of the cytochrome b6-f complex are cytochrome b6, subunit IV (17 kDa polypeptide, PetD), cytochrome f and the Rieske protein, while the 4 small subunits are PetG, PetL, PetM and PetN. The complex functions as a dimer.

It is found in the plastid. It localises to the chloroplast thylakoid membrane. Its function is as follows. Component of the cytochrome b6-f complex, which mediates electron transfer between photosystem II (PSII) and photosystem I (PSI), cyclic electron flow around PSI, and state transitions. The sequence is that of Cytochrome b6-f complex subunit 8 from Illicium oligandrum (Star anise).